The primary structure comprises 604 residues: NADPH oxidase activator (604 aa).

TPR repeat units lie at residues 36-69 (SKIN…DKYL) and 71-103 (SSYY…LRGH). 2 disordered regions span residues 180–298 (FKPP…KLPS) and 383–581 (DIIP…PYQV). 2 stretches are compositionally biased toward low complexity: residues 194–215 (SATT…SPPS) and 225–243 (PSSS…SSSP). A compositionally biased stretch (pro residues) spans 244–260 (KLPPTPKPSFGSSPPPS). Positions 261-284 (SSSSSSSSSSSSSSSISPLTNKTL) are enriched in low complexity. The 76-residue stretch at 309–384 (KITLKVFYKD…EINEINVKDI (76 aa)) folds into the PB1 domain. 3 stretches are compositionally biased toward low complexity: residues 396–424 (PDKT…SSSS), 435–453 (PKTT…TTST), and 467–483 (FGST…SSSS). Polar residues predominate over residues 502 to 528 (LLKQQNQTQSINIPPKVPTSSRPKMTQ). Positions 529-570 (SHSPPSSSPLSSYSTSFQSVSSPSLSSSYNGSTSSYGGFSSS) are enriched in low complexity. Residues 573-604 (PPTPYPYQVLYTDSNEKYYLNTETNETFWELP) form the WW domain.

May function as an activator of NOX1, a superoxide-producing NADPH oxidase. In Dictyostelium discoideum (Social amoeba), this protein is NADPH oxidase activator (ncfA).